A 492-amino-acid polypeptide reads, in one-letter code: Glutamate--cysteine ligase A, chloroplastic (492 aa).

Cysteine 156 and cysteine 376 are joined by a disulfide.

The protein belongs to the carboxylate-amine ligase family. Glutamate--cysteine ligase type 2 subfamily. As to quaternary structure, homodimer or monomer when oxidized or reduced, respectively. In terms of processing, the Cys-156-Cys-376 disulfide bridge is known to modulate the enzyme activity according to the redox status. The oxidized form constitutes the active enzyme.

The protein localises to the plastid. It is found in the chloroplast. It catalyses the reaction L-cysteine + L-glutamate + ATP = gamma-L-glutamyl-L-cysteine + ADP + phosphate + H(+). It functions in the pathway sulfur metabolism; glutathione biosynthesis; glutathione from L-cysteine and L-glutamate: step 1/2. In Oryza sativa subsp. indica (Rice), this protein is Glutamate--cysteine ligase A, chloroplastic (GSH1-1).